A 305-amino-acid polypeptide reads, in one-letter code: Mycothiol acetyltransferase (305 aa).

N-acetyltransferase domains lie at Asp-10–Glu-154 and Ile-156–Ala-305. A 1D-myo-inositol 2-(L-cysteinylamino)-2-deoxy-alpha-D-glucopyranoside-binding site is contributed by Glu-38. Leu-82–Val-84 provides a ligand contact to acetyl-CoA. Glu-183, Lys-225, and Glu-238 together coordinate 1D-myo-inositol 2-(L-cysteinylamino)-2-deoxy-alpha-D-glucopyranoside. Residues Val-242–Ile-244 and Gln-249–Arg-255 each bind acetyl-CoA. Tyr-276 lines the 1D-myo-inositol 2-(L-cysteinylamino)-2-deoxy-alpha-D-glucopyranoside pocket. Asn-281–His-286 contributes to the acetyl-CoA binding site.

The protein belongs to the acetyltransferase family. MshD subfamily. Monomer.

The catalysed reaction is 1D-myo-inositol 2-(L-cysteinylamino)-2-deoxy-alpha-D-glucopyranoside + acetyl-CoA = mycothiol + CoA + H(+). Its function is as follows. Catalyzes the transfer of acetyl from acetyl-CoA to desacetylmycothiol (Cys-GlcN-Ins) to form mycothiol. The polypeptide is Mycothiol acetyltransferase (Rhodococcus opacus (strain B4)).